Here is a 323-residue protein sequence, read N- to C-terminus: Oligodendrocyte transcription factor 2 (323 aa).

Polar residues-rich tracts occupy residues 1-13 (MDSDASLVSSRPS) and 27-45 (KGSSGSAFTGGTVSSSTPS). The interval 1–107 (MDSDASLVSS…KKQMTEPELQ (107 aa)) is disordered. Residues 76-93 (KSSSSSTSSSTSSAAASS) show a composition bias toward low complexity. The bHLH domain maps to 108–162 (QLRLKINSRERKRMHDLNIAMDGLREVMPYAHGPSVRKLSKIATLLLARNYILML).

In terms of assembly, interacts with NKX2-2. Interacts with ZNF488. In terms of tissue distribution, expressed in the brain, in oligodendrocytes. Strongly expressed in oligodendrogliomas, while expression is weak to moderate in astrocytomas. Expression in glioblastomas highly variable.

The protein resides in the nucleus. The protein localises to the cytoplasm. In terms of biological role, required for oligodendrocyte and motor neuron specification in the spinal cord, as well as for the development of somatic motor neurons in the hindbrain. Functions together with ZNF488 to promote oligodendrocyte differentiation. Cooperates with OLIG1 to establish the pMN domain of the embryonic neural tube. Antagonist of V2 interneuron and of NKX2-2-induced V3 interneuron development. The polypeptide is Oligodendrocyte transcription factor 2 (OLIG2) (Homo sapiens (Human)).